Consider the following 135-residue polypeptide: MLSPKRTRFRKQHRGRMKGISYRGNRICFGKYALQALEPAWITSRQIEAGRRAMTRNVRRGGKIWVRIFPDKPVTVRPTETRMGSGKGSPEYWVAVVKPGRILYEMGGVAENIARKAISIAASKMPIRTQFIISG.

It belongs to the universal ribosomal protein uL16 family. In terms of assembly, part of the 50S ribosomal subunit.

The protein localises to the plastid. It localises to the chloroplast. The polypeptide is Large ribosomal subunit protein uL16c (Eucalyptus globulus subsp. globulus (Tasmanian blue gum)).